A 380-amino-acid polypeptide reads, in one-letter code: Alpha-glucoside transport system permease protein AglG (380 aa).

The next 6 helical transmembrane spans lie at 13 to 33 (VHLSVLLLVLLWTLPTAGLLI), 179 to 199 (VIPILIAAFAAYALAWMPFPG), 202 to 222 (VLLAVVVGLLVVPLQMSLIPL), 239 to 259 (TYMGIWLAHTGFGLPLAIYLL), 288 to 308 (IILPLSFPALASFAIFQFLWT), and 344 to 364 (EILTASAFITIVVPLIVFFAL). Positions 167-364 (FLNSLTVAVP…VVPLIVFFAL (198 aa)) constitute an ABC transmembrane type-1 domain.

It belongs to the binding-protein-dependent transport system permease family. MalFG subfamily.

The protein localises to the cell inner membrane. Part of the binding-protein-dependent transport system for alpha-glucosides such as sucrose, maltose and trehalose. Probably responsible for the translocation of the substrate across the membrane. This Rhizobium meliloti (strain 1021) (Ensifer meliloti) protein is Alpha-glucoside transport system permease protein AglG (aglG).